Consider the following 67-residue polypeptide: Ayadualin (67 aa).

Residues 1–20 (MNKIILFSAVFLALVFCAEA) form the signal peptide. Acidic residues predominate over residues 35–54 (PDDTVDIDEGLPDAFDEDYE). The segment at 35–67 (PDDTVDIDEGLPDAFDEDYEQDGHNPYPCRGDC) is disordered. The short motif at 64–66 (RGD) is the Integrin-binding motif element.

In terms of tissue distribution, salivary gland.

It is found in the secreted. Functionally, inhibits collagen- and ADP-induced host platelet aggregation by blocking the binding of host integrin alpha-IIb/beta-3 (ITGA2B/ITGB3) to fibrinogen. Inhibits the intrinsic blood coagulation pathway in the host by blocking the activity of host coagulation factor XIIa (F12). The polypeptide is Ayadualin (Lutzomyia ayacuchensis (Sand fly)).